The following is a 380-amino-acid chain: Chaperone protein DnaJ 2 (380 aa).

Positions 10–75 (DYYKILGVSK…KKRKEYDQAR (66 aa)) constitute a J domain. Residues 32–56 (KIARDNHPDSHPGDKAAEARFKEAS) are compositionally biased toward basic and acidic residues. Positions 32-63 (KIARDNHPDSHPGDKAAEARFKEASEANDVLS) are disordered. Residues 151–230 (GTTVTMDMVS…CHGSGRAKST (80 aa)) form a CR-type zinc finger. Zn(2+)-binding residues include Cys-164, Cys-167, Cys-181, Cys-184, Cys-204, Cys-207, Cys-218, and Cys-221. CXXCXGXG motif repeat units lie at residues 164-171 (CQACRGTG), 181-188 (CSTCQGSG), 204-211 (CPDCHGRG), and 218-225 (CQVCHGSG).

Belongs to the DnaJ family. As to quaternary structure, homodimer. The cofactor is Zn(2+).

It localises to the cytoplasm. In terms of biological role, participates actively in the response to hyperosmotic and heat shock by preventing the aggregation of stress-denatured proteins and by disaggregating proteins, also in an autonomous, DnaK-independent fashion. Unfolded proteins bind initially to DnaJ; upon interaction with the DnaJ-bound protein, DnaK hydrolyzes its bound ATP, resulting in the formation of a stable complex. GrpE releases ADP from DnaK; ATP binding to DnaK triggers the release of the substrate protein, thus completing the reaction cycle. Several rounds of ATP-dependent interactions between DnaJ, DnaK and GrpE are required for fully efficient folding. Also involved, together with DnaK and GrpE, in the DNA replication of plasmids through activation of initiation proteins. The sequence is that of Chaperone protein DnaJ 2 from Cutibacterium acnes (strain DSM 16379 / KPA171202) (Propionibacterium acnes).